We begin with the raw amino-acid sequence, 212 residues long: Imidazole glycerol phosphate synthase subunit HisH (212 aa).

Residues 1–212 (MLAILDYKAG…YEYCKEVSDA (212 aa)) form the Glutamine amidotransferase type-1 domain. Residue Cys79 is the Nucleophile of the active site. Active-site residues include His187 and Glu189.

In terms of assembly, heterodimer of HisH and HisF.

It is found in the cytoplasm. It carries out the reaction 5-[(5-phospho-1-deoxy-D-ribulos-1-ylimino)methylamino]-1-(5-phospho-beta-D-ribosyl)imidazole-4-carboxamide + L-glutamine = D-erythro-1-(imidazol-4-yl)glycerol 3-phosphate + 5-amino-1-(5-phospho-beta-D-ribosyl)imidazole-4-carboxamide + L-glutamate + H(+). The enzyme catalyses L-glutamine + H2O = L-glutamate + NH4(+). Its pathway is amino-acid biosynthesis; L-histidine biosynthesis; L-histidine from 5-phospho-alpha-D-ribose 1-diphosphate: step 5/9. Functionally, IGPS catalyzes the conversion of PRFAR and glutamine to IGP, AICAR and glutamate. The HisH subunit catalyzes the hydrolysis of glutamine to glutamate and ammonia as part of the synthesis of IGP and AICAR. The resulting ammonia molecule is channeled to the active site of HisF. This chain is Imidazole glycerol phosphate synthase subunit HisH, found in Maridesulfovibrio salexigens (strain ATCC 14822 / DSM 2638 / NCIMB 8403 / VKM B-1763) (Desulfovibrio salexigens).